A 179-amino-acid polypeptide reads, in one-letter code: Probable chorismate pyruvate-lyase (179 aa).

Arg82, Leu120, and Glu165 together coordinate substrate.

This sequence belongs to the UbiC family.

It localises to the cytoplasm. The enzyme catalyses chorismate = 4-hydroxybenzoate + pyruvate. The protein operates within cofactor biosynthesis; ubiquinone biosynthesis. Removes the pyruvyl group from chorismate, with concomitant aromatization of the ring, to provide 4-hydroxybenzoate (4HB) for the ubiquinone pathway. The sequence is that of Probable chorismate pyruvate-lyase from Vibrio parahaemolyticus serotype O3:K6 (strain RIMD 2210633).